We begin with the raw amino-acid sequence, 517 residues long: Probable protein phosphatase 2C 20 (517 aa).

Residues 1-59 (MWVMQGERRRARAPWGPPDTGGALLERWISRERRSDSRDASGSAKQRSAMGNSLPVESK) form a disordered region. A compositionally biased stretch (basic and acidic residues) spans 28–39 (WISRERRSDSRD). Positions 70 to 373 (KYVVSSMQGW…DNTTVILVLF (304 aa)) constitute a PPM-type phosphatase domain. Asp105, Gly106, Glu323, and Asp364 together coordinate Mn(2+). The disordered stretch occupies residues 380 to 517 (AVPPVDTDTD…PPHDDTYHRW (138 aa)). Polar residues predominate over residues 402–414 (GSNNATASDNNDP). Residues 438–455 (DATATAVGSSSTTAVAAD) are compositionally biased toward low complexity. Over residues 499–517 (LPRSNPDKSPPHDDTYHRW) the composition is skewed to basic and acidic residues.

Belongs to the PP2C family. Requires Mg(2+) as cofactor. It depends on Mn(2+) as a cofactor.

The catalysed reaction is O-phospho-L-seryl-[protein] + H2O = L-seryl-[protein] + phosphate. The enzyme catalyses O-phospho-L-threonyl-[protein] + H2O = L-threonyl-[protein] + phosphate. The chain is Probable protein phosphatase 2C 20 from Oryza sativa subsp. japonica (Rice).